The following is a 337-amino-acid chain: tRNA N6-adenosine threonylcarbamoyltransferase (337 aa).

Fe cation-binding residues include His114 and His118. Substrate contacts are provided by residues 136 to 140 (LVSGG), Asp169, Gly182, Asp186, and Asn275. Asp301 serves as a coordination point for Fe cation.

This sequence belongs to the KAE1 / TsaD family. It depends on Fe(2+) as a cofactor.

It is found in the cytoplasm. The catalysed reaction is L-threonylcarbamoyladenylate + adenosine(37) in tRNA = N(6)-L-threonylcarbamoyladenosine(37) in tRNA + AMP + H(+). Its function is as follows. Required for the formation of a threonylcarbamoyl group on adenosine at position 37 (t(6)A37) in tRNAs that read codons beginning with adenine. Is involved in the transfer of the threonylcarbamoyl moiety of threonylcarbamoyl-AMP (TC-AMP) to the N6 group of A37, together with TsaE and TsaB. TsaD likely plays a direct catalytic role in this reaction. In Streptococcus thermophilus (strain CNRZ 1066), this protein is tRNA N6-adenosine threonylcarbamoyltransferase.